The sequence spans 340 residues: Proline-rich transmembrane protein 2 (340 aa).

The segment at 1-261 (MAASSSEISE…AGPGVEGGEG (261 aa)) is disordered. Topologically, residues 1 to 268 (MAASSSEISE…GEGTQKPRDY (268 aa)) are cytoplasmic. Ser-28 is modified (phosphoserine). Position 74 is a phosphothreonine (Thr-74). 2 stretches are compositionally biased toward pro residues: residues 131-155 (PPEP…PKPA) and 197-207 (APEPHSPPSKK). At Ser-238 the chain carries Phosphoserine. Arg-240 carries the post-translational modification Omega-N-methylarginine. Phosphoserine is present on residues Ser-248 and Ser-249. The segment at residues 269–289 (IILAILSCFCPMWPVNIVAFA) is an intramembrane region (helical). Residues 290 to 317 (YAVMSRNSLQQGDVDGAQRLGRVAKLLS) lie on the Cytoplasmic side of the membrane. Residues 318 to 338 (IVALVGGVLIIIASCVINLGV) form a helical membrane-spanning segment. Topologically, residues 339–340 (YK) are extracellular.

The protein belongs to the CD225/Dispanin family. As to quaternary structure, component of the outer core of AMPAR complex. AMPAR complex consists of an inner core made of 4 pore-forming GluA/GRIA proteins (GRIA1, GRIA2, GRIA3 and GRIA4) and 4 major auxiliary subunits arranged in a twofold symmetry. One of the two pairs of distinct binding sites is occupied either by CNIH2, CNIH3 or CACNG2, CACNG3. The other harbors CACNG2, CACNG3, CACNG4, CACNG8 or GSG1L. This inner core of AMPAR complex is complemented by outer core constituents binding directly to the GluA/GRIA proteins at sites distinct from the interaction sites of the inner core constituents. Outer core constituents include at least PRRT1, PRRT2, CKAMP44/SHISA9, FRRS1L and NRN1. The proteins of the inner and outer core serve as a platform for other, more peripherally associated AMPAR constituents. Alone or in combination, these auxiliary subunits control the gating and pharmacology of the AMPAR complex and profoundly impact their biogenesis and protein processing. Interacts with intersectin 1/ITSN1. Interacts with SNARE complex components, including SNAP25, STX1A, SYT1 and SYT2; this interaction may inhibit SNARE complex formation.

Its subcellular location is the cell membrane. The protein localises to the presynaptic cell membrane. It is found in the synapse. It localises to the cell projection. The protein resides in the axon. Its subcellular location is the cytoplasmic vesicle. The protein localises to the secretory vesicle. It is found in the synaptic vesicle membrane. It localises to the postsynaptic density membrane. The protein resides in the dendritic spine. In terms of biological role, as a component of the outer core of AMPAR complex, may be involved in synaptic transmission in the central nervous system. In hippocampal neurons, in presynaptic terminals, plays an important role in the final steps of neurotransmitter release, possibly by regulating Ca(2+)-sensing. In the cerebellum, may inhibit SNARE complex formation and down-regulate short-term facilitation. The chain is Proline-rich transmembrane protein 2 (PRRT2) from Pongo abelii (Sumatran orangutan).